The primary structure comprises 613 residues: Dihydroxy-acid dehydratase (613 aa).

Mg(2+) is bound at residue aspartate 81. Cysteine 122 serves as a coordination point for [2Fe-2S] cluster. The Mg(2+) site is built by aspartate 123 and lysine 124. Lysine 124 is modified (N6-carboxylysine). A [2Fe-2S] cluster-binding site is contributed by cysteine 193. Glutamate 489 provides a ligand contact to Mg(2+). The active-site Proton acceptor is the serine 515.

The protein belongs to the IlvD/Edd family. In terms of assembly, homodimer. It depends on [2Fe-2S] cluster as a cofactor. Mg(2+) serves as cofactor.

The catalysed reaction is (2R)-2,3-dihydroxy-3-methylbutanoate = 3-methyl-2-oxobutanoate + H2O. The enzyme catalyses (2R,3R)-2,3-dihydroxy-3-methylpentanoate = (S)-3-methyl-2-oxopentanoate + H2O. Its pathway is amino-acid biosynthesis; L-isoleucine biosynthesis; L-isoleucine from 2-oxobutanoate: step 3/4. It participates in amino-acid biosynthesis; L-valine biosynthesis; L-valine from pyruvate: step 3/4. In terms of biological role, functions in the biosynthesis of branched-chain amino acids. Catalyzes the dehydration of (2R,3R)-2,3-dihydroxy-3-methylpentanoate (2,3-dihydroxy-3-methylvalerate) into 2-oxo-3-methylpentanoate (2-oxo-3-methylvalerate) and of (2R)-2,3-dihydroxy-3-methylbutanoate (2,3-dihydroxyisovalerate) into 2-oxo-3-methylbutanoate (2-oxoisovalerate), the penultimate precursor to L-isoleucine and L-valine, respectively. This is Dihydroxy-acid dehydratase from Pseudomonas fluorescens (strain Pf0-1).